The chain runs to 266 residues: Putative carbamate hydrolase RutD (266 aa).

It belongs to the AB hydrolase superfamily. Hydrolase RutD family.

It carries out the reaction carbamate + 2 H(+) = NH4(+) + CO2. Functionally, involved in pyrimidine catabolism. May facilitate the hydrolysis of carbamate, a reaction that can also occur spontaneously. The protein is Putative carbamate hydrolase RutD of Enterobacter cloacae subsp. cloacae (strain ATCC 13047 / DSM 30054 / NBRC 13535 / NCTC 10005 / WDCM 00083 / NCDC 279-56).